A 132-amino-acid chain; its full sequence is Small ribosomal subunit protein uS11 (132 aa).

It belongs to the universal ribosomal protein uS11 family. Part of the 30S ribosomal subunit.

Functionally, located on the platform of the 30S subunit. This Saccharolobus solfataricus (strain ATCC 35092 / DSM 1617 / JCM 11322 / P2) (Sulfolobus solfataricus) protein is Small ribosomal subunit protein uS11.